A 216-amino-acid chain; its full sequence is MPKIISKRKFNILRKTKEEIFSQIVYTKKRNGLHKAAKEYYFKDKDFTIIEDQQDRPDKPEELDTPDIPKPPKPPKGPDQPEEPGQPGGPDDPNSGNKKMPKPDEFVTHRQLQEFKKDLLVELHEIFPTKPELKRVEEKVDVLFELQKAQGEQIRIQGEQIKELKVEQKAQGETLQLILQTLQKMNDRLDKIEGKMDKMESRMDKMETRLDKLESK.

Over residues 47–62 (FTIIEDQQDRPDKPEE) the composition is skewed to basic and acidic residues. 2 disordered regions span residues 47 to 104 (FTII…PKPD) and 194 to 216 (GKMDKMESRMDKMETRLDKLESK). Positions 68–78 (IPKPPKPPKGP) are enriched in pro residues. Residues 83-93 (EPGQPGGPDDP) are compositionally biased toward low complexity.

It belongs to the UPF0134 family.

This Mycoplasma pneumoniae (strain ATCC 29342 / M129 / Subtype 1) (Mycoplasmoides pneumoniae) protein is UPF0134 protein MPN_344.